Reading from the N-terminus, the 80-residue chain is Conotoxin PnMKLT1-0121 (80 aa).

The N-terminal stretch at Met-1 to Ala-22 is a signal peptide. The propeptide occupies Asp-23 to Asn-49. Intrachain disulfides connect Cys-52-Cys-67, Cys-59-Cys-71, and Cys-66-Cys-75.

Belongs to the conotoxin O1 superfamily. Expressed by the venom duct.

Its subcellular location is the secreted. The protein is Conotoxin PnMKLT1-0121 of Conus pennaceus (Feathered cone).